Reading from the N-terminus, the 509-residue chain is Maturase K (509 aa).

Belongs to the intron maturase 2 family. MatK subfamily.

It is found in the plastid. The protein resides in the chloroplast. Its function is as follows. Usually encoded in the trnK tRNA gene intron. Probably assists in splicing its own and other chloroplast group II introns. The sequence is that of Maturase K from Clematis vitalba (Evergreen clematis).